The primary structure comprises 54 residues: UPF0391 membrane protein Mpe_A2904 (54 aa).

The next 2 membrane-spanning stretches (helical) occupy residues 5–25 and 30–50; these read AVVF…GIAA and IAKI…LFGL.

The protein belongs to the UPF0391 family.

Its subcellular location is the cell membrane. The polypeptide is UPF0391 membrane protein Mpe_A2904 (Methylibium petroleiphilum (strain ATCC BAA-1232 / LMG 22953 / PM1)).